Consider the following 117-residue polypeptide: Ribosome maturation factor RimP (117 aa).

Belongs to the RimP family.

It is found in the cytoplasm. Its function is as follows. Required for maturation of 30S ribosomal subunits. This Rickettsia prowazekii (strain Madrid E) protein is Ribosome maturation factor RimP.